The primary structure comprises 323 residues: tRNA U34 carboxymethyltransferase (323 aa).

Carboxy-S-adenosyl-L-methionine-binding positions include K91, W105, K110, G130, 152-154, 181-182, M196, Y200, and R315; these read DPS and IE.

It belongs to the class I-like SAM-binding methyltransferase superfamily. CmoB family. Homotetramer.

It carries out the reaction carboxy-S-adenosyl-L-methionine + 5-hydroxyuridine(34) in tRNA = 5-carboxymethoxyuridine(34) in tRNA + S-adenosyl-L-homocysteine + H(+). Functionally, catalyzes carboxymethyl transfer from carboxy-S-adenosyl-L-methionine (Cx-SAM) to 5-hydroxyuridine (ho5U) to form 5-carboxymethoxyuridine (cmo5U) at position 34 in tRNAs. This is tRNA U34 carboxymethyltransferase from Vibrio campbellii (strain ATCC BAA-1116).